The following is a 349-amino-acid chain: tRNA pseudouridine synthase D (349 aa).

Phe-27 contacts substrate. Residue Asp-80 is the Nucleophile of the active site. Asn-129 contributes to the substrate binding site. The TRUD domain maps to 155–303 (GVPNYFGAQR…VEAARRAMLL (149 aa)). Position 329 (Phe-329) interacts with substrate.

The protein belongs to the pseudouridine synthase TruD family.

It carries out the reaction uridine(13) in tRNA = pseudouridine(13) in tRNA. Its function is as follows. Responsible for synthesis of pseudouridine from uracil-13 in transfer RNAs. This chain is tRNA pseudouridine synthase D, found in Escherichia coli (strain K12 / MC4100 / BW2952).